A 402-amino-acid chain; its full sequence is Nodal homolog 4-A (402 aa).

The first 18 residues, 1 to 18 (MHLYFYCLILLFVPGGNS), serve as a signal peptide directing secretion. A propeptide spanning residues 19–278 (LGINSYLKHM…TIAHTRRHRR (260 aa)) is cleaved from the precursor. N-linked (GlcNAc...) asparagine glycosylation is found at N37, N238, and N340. 3 cysteine pairs are disulfide-bonded: C302–C368, C331–C399, and C335–C401.

It belongs to the TGF-beta family. As to quaternary structure, homodimer; disulfide-linked. As to expression, during blastula stages, expressed in the endoderm at a higher level dorsally than ventrally. Expressed in the deep cells of the Spemann organizer at the gastrula stage. Expressed in the notochord (a derivative of the organizer) and neural tube during the neural stages.

Its subcellular location is the secreted. Functionally, cooperation and regulatory loops of multiple nodals are essential for mesendoderm patterning in early embryos. Plays a role in mesoderm formation and may be required for neural development. In Xenopus laevis (African clawed frog), this protein is Nodal homolog 4-A (nodal4-a).